Consider the following 121-residue polypeptide: Small ribosomal subunit protein uS13 (121 aa).

Residues 95 to 121 are disordered; sequence LPMRGQRTRTNARTRKGPRKAAASLKK.

The protein belongs to the universal ribosomal protein uS13 family. As to quaternary structure, part of the 30S ribosomal subunit. Forms a loose heterodimer with protein S19. Forms two bridges to the 50S subunit in the 70S ribosome.

Its function is as follows. Located at the top of the head of the 30S subunit, it contacts several helices of the 16S rRNA. In the 70S ribosome it contacts the 23S rRNA (bridge B1a) and protein L5 of the 50S subunit (bridge B1b), connecting the 2 subunits; these bridges are implicated in subunit movement. Contacts the tRNAs in the A and P-sites. The polypeptide is Small ribosomal subunit protein uS13 (Polaromonas naphthalenivorans (strain CJ2)).